The following is a 560-amino-acid chain: Dihydroxy-acid dehydratase (560 aa).

Asp-78 provides a ligand contact to Mg(2+). A [2Fe-2S] cluster-binding site is contributed by Cys-119. The Mg(2+) site is built by Asp-120 and Lys-121. Lys-121 bears the N6-carboxylysine mark. Position 192 (Cys-192) interacts with [2Fe-2S] cluster. Glu-446 is a Mg(2+) binding site. The Proton acceptor role is filled by Ser-472.

This sequence belongs to the IlvD/Edd family. Homodimer. [2Fe-2S] cluster is required as a cofactor. Requires Mg(2+) as cofactor.

It catalyses the reaction (2R)-2,3-dihydroxy-3-methylbutanoate = 3-methyl-2-oxobutanoate + H2O. The enzyme catalyses (2R,3R)-2,3-dihydroxy-3-methylpentanoate = (S)-3-methyl-2-oxopentanoate + H2O. It functions in the pathway amino-acid biosynthesis; L-isoleucine biosynthesis; L-isoleucine from 2-oxobutanoate: step 3/4. The protein operates within amino-acid biosynthesis; L-valine biosynthesis; L-valine from pyruvate: step 3/4. Functionally, functions in the biosynthesis of branched-chain amino acids. Catalyzes the dehydration of (2R,3R)-2,3-dihydroxy-3-methylpentanoate (2,3-dihydroxy-3-methylvalerate) into 2-oxo-3-methylpentanoate (2-oxo-3-methylvalerate) and of (2R)-2,3-dihydroxy-3-methylbutanoate (2,3-dihydroxyisovalerate) into 2-oxo-3-methylbutanoate (2-oxoisovalerate), the penultimate precursor to L-isoleucine and L-valine, respectively. This Anaeromyxobacter dehalogenans (strain 2CP-1 / ATCC BAA-258) protein is Dihydroxy-acid dehydratase.